Consider the following 771-residue polypeptide: MGRKKHRTIPAVEVYEKSDGFPMPTAPPMSPSRMDGVYPSHHVPPLHQAYHVQPASANHVPDQIARFNVIKPDRLAKRHNPQLYTKRGCTDVFCCFLFFVFLCGWVVVAGFGIMWGDPQRLIYPTDSEFRRCGVNLEGSYNFSKRPYLFYFDLTKCISYATALGGCQTTQLCVKECPSTYFSYLQLRTASVSEIQNKMKSVVYCTDDVDKTTVTTFQALQNLVQRGKCVSYTVKSVPVLQRCFPEAIFNAVDNVNNVLNSSNSLDYLKRTFGDDALIPQDIQITGQSSEVMKSVVEDQPVTHKVIHDLSQTWWQTLILIFAAGILSFIWTVIMRLLGSLIIWLSILIVLVALGFGAGFSWLKWNTLKTTGAIDDYSFHPAFDAYFEMPTTWLVVAIATSVLLLIFLLVILFIRQRISIACALISESSKAIGSMMSTLLFPLFPFLLHIGVFALWGSIAIWLASSGQEVCRLKETNGQVYNTSTKCDCTAKVTGCTYVGIEKESETIFWLQVYNLFAFFWLSCFVTALGDIALAGAFASYYWARDKRHDVPTFPVIRALNRAIRYNLGSIAFGSLIIAIVKIIRVLLEYIDHKLGKSQNKAVKWFLMCLKCCFWCLEVFFKFLTKNAYIMIAIYGKNFFSSAKDSFLLITRNIVRTVVVHKVAGILLFLGKSMITLGMGILSFYYFSGRWVVEGVPKVDLYYYFVPIVIVVIGSYFMADLFFDVYEMAVDTTFICFLEDSEQNDGSLERPFFMSEKLLEILGNKNDIPLHSK.

Residues 96 to 116 (FLFFVFLCGWVVVAGFGIMWG) form a helical membrane-spanning segment. Asparagine 141 and asparagine 259 each carry an N-linked (GlcNAc...) asparagine glycan. The next 4 helical transmembrane spans lie at 312–332 (WWQT…WTVI), 335–355 (LLGS…LGFG), 392–412 (LVVA…ILFI), and 441–461 (LFPF…AIWL). Asparagine 480 carries N-linked (GlcNAc...) asparagine glycosylation. The next 5 helical transmembrane spans lie at 514–534 (LFAF…ALAG), 566–586 (LGSI…RVLL), 603–623 (WFLM…KFLT), 662–682 (AGIL…ILSF), and 701–721 (YYFV…DLFF).

This sequence belongs to the CTL (choline transporter-like) family.

It is found in the membrane. This chain is Choline transporter-like protein 1 (chtl-1), found in Caenorhabditis elegans.